The chain runs to 409 residues: Serine hydroxymethyltransferase (409 aa).

(6S)-5,6,7,8-tetrahydrofolate is bound by residues Leu-116 and 120–122 (GHL). Lys-225 bears the N6-(pyridoxal phosphate)lysine mark.

This sequence belongs to the SHMT family. In terms of assembly, homodimer. Requires pyridoxal 5'-phosphate as cofactor.

Its subcellular location is the cytoplasm. It catalyses the reaction (6R)-5,10-methylene-5,6,7,8-tetrahydrofolate + glycine + H2O = (6S)-5,6,7,8-tetrahydrofolate + L-serine. It functions in the pathway one-carbon metabolism; tetrahydrofolate interconversion. The protein operates within amino-acid biosynthesis; glycine biosynthesis; glycine from L-serine: step 1/1. Its function is as follows. Catalyzes the reversible interconversion of serine and glycine with tetrahydrofolate (THF) serving as the one-carbon carrier. This reaction serves as the major source of one-carbon groups required for the biosynthesis of purines, thymidylate, methionine, and other important biomolecules. Also exhibits THF-independent aldolase activity toward beta-hydroxyamino acids, producing glycine and aldehydes, via a retro-aldol mechanism. This Acholeplasma laidlawii (strain PG-8A) protein is Serine hydroxymethyltransferase.